The chain runs to 390 residues: MPVLRDRIPRRGFFLGLALLAALSGCSSTDTFEQPVPVPEIEASVEFERVWSMSVGDGHDGDFLYLAPLVTGDLIYAASADGELYAVATETGEVAWESEFEDRIFSGLGGDGQNLYLTTENADLVALSREDGSEVWRTSLPTEVLSSPQSNGSLVVAQTTDGKVLGFSATDGEKLWQYDGSVPVLSMRAAAAPLVGGDVVIASFASGKLIALTAASGQPMWQYEVGQPQGRTELERLVDVTGQPLVIETAVMVVGYQGKLALVDIRTGQEIWSRKASSLYSPMIGGGQIYLAAADGEIIALRGSDRREVWTQDRLAWRQLTQPMVYEDYLVVGDFEGYLHALDREDGSLVGQREFDDEGIRVPAQRLANGNLLVFGNSGKMAVFQVKPQD.

The first 25 residues, 1–25 (MPVLRDRIPRRGFFLGLALLAALSG), serve as a signal peptide directing secretion. C26 carries the N-palmitoyl cysteine lipid modification. Residue C26 is the site of S-diacylglycerol cysteine attachment.

Belongs to the BamB family. As to quaternary structure, part of the Bam complex.

It is found in the cell outer membrane. Its function is as follows. Part of the outer membrane protein assembly complex, which is involved in assembly and insertion of beta-barrel proteins into the outer membrane. This chain is Outer membrane protein assembly factor BamB, found in Marinobacter adhaerens (strain DSM 23420 / HP15).